Consider the following 113-residue polypeptide: Putative insulin-like growth factor 2-associated protein (113 aa).

As to expression, expressed in fetal and adult liver.

This is Putative insulin-like growth factor 2-associated protein from Homo sapiens (Human).